Reading from the N-terminus, the 107-residue chain is Thiosulfate sulfurtransferase GlpE (107 aa).

One can recognise a Rhodanese domain in the interval 16-104; the sequence is KKRDIVIADV…WKAHHPTSDA (89 aa). The active-site Cysteine persulfide intermediate is C64.

It belongs to the GlpE family.

It localises to the cytoplasm. It catalyses the reaction thiosulfate + hydrogen cyanide = thiocyanate + sulfite + 2 H(+). It carries out the reaction thiosulfate + [thioredoxin]-dithiol = [thioredoxin]-disulfide + hydrogen sulfide + sulfite + 2 H(+). In terms of biological role, transferase that catalyzes the transfer of sulfur from thiosulfate to thiophilic acceptors such as cyanide or dithiols. May function in a CysM-independent thiosulfate assimilation pathway by catalyzing the conversion of thiosulfate to sulfite, which can then be used for L-cysteine biosynthesis. The sequence is that of Thiosulfate sulfurtransferase GlpE from Coxiella burnetii (strain CbuK_Q154) (Coxiella burnetii (strain Q154)).